A 268-amino-acid polypeptide reads, in one-letter code: Undecaprenyl-diphosphatase (268 aa).

Helical transmembrane passes span 42 to 62 (VPGK…ICVL), 86 to 106 (AIFV…DFIL), 108 to 128 (VLFT…AIVV), 158 to 178 (IALV…LLVG), 184 to 204 (AAEF…VVSL), 218 to 238 (LIAA…KWLV), and 246 to 266 (FTVF…YFSL).

It belongs to the UppP family.

It localises to the cell inner membrane. It carries out the reaction di-trans,octa-cis-undecaprenyl diphosphate + H2O = di-trans,octa-cis-undecaprenyl phosphate + phosphate + H(+). Functionally, catalyzes the dephosphorylation of undecaprenyl diphosphate (UPP). Confers resistance to bacitracin. This chain is Undecaprenyl-diphosphatase, found in Parvibaculum lavamentivorans (strain DS-1 / DSM 13023 / NCIMB 13966).